The primary structure comprises 675 residues: Potassium-transporting ATPase ATP-binding subunit (675 aa).

The next 4 helical transmembrane spans lie at 38-58 (VMFVVYLGTALTAYLTVANLV), 67-87 (LAITLLLLLTVLFANFAEGMA), 216-236 (IALSILLSGLTLIFLLAVVTL), and 253-273 (IALLVCLIPTTIGGLLPAIGI). Catalysis depends on Asp304, which acts as the 4-aspartylphosphate intermediate. ATP-binding positions include Asp341, Glu345, 371-378 (FTAQTRMS), and Lys389. 2 residues coordinate Mg(2+): Asp512 and Asp516. Helical transmembrane passes span 582–602 (FAILPALFVTAYPQLGVLNVM), 610–630 (AVLSAVIFNALIIPVLIPLAL), and 654–674 (GGILVPFIAIKLIDLLIGGLM).

Belongs to the cation transport ATPase (P-type) (TC 3.A.3) family. Type IA subfamily. The system is composed of three essential subunits: KdpA, KdpB and KdpC.

Its subcellular location is the cell membrane. It carries out the reaction K(+)(out) + ATP + H2O = K(+)(in) + ADP + phosphate + H(+). Functionally, part of the high-affinity ATP-driven potassium transport (or Kdp) system, which catalyzes the hydrolysis of ATP coupled with the electrogenic transport of potassium into the cytoplasm. This subunit is responsible for energy coupling to the transport system and for the release of the potassium ions to the cytoplasm. This is Potassium-transporting ATPase ATP-binding subunit from Deinococcus radiodurans (strain ATCC 13939 / DSM 20539 / JCM 16871 / CCUG 27074 / LMG 4051 / NBRC 15346 / NCIMB 9279 / VKM B-1422 / R1).